Consider the following 327-residue polypeptide: Surface protein P12p (327 aa).

6-Cys domains lie at 21–168 (NIEI…LKKN) and 169–304 (IIFG…FSNY). 6 disulfide bridges follow: Cys25/Cys60, Cys74/Cys144, Cys93/Cys142, Cys173/Cys208, Cys223/Cys285, and Cys234/Cys283. N-linked (GlcNAc...) asparagine glycans are attached at residues Asn246, Asn264, and Asn298.

It localises to the cell surface. The protein resides in the cell membrane. The sequence is that of Surface protein P12p (P12p) from Plasmodium berghei (strain Anka).